Here is a 283-residue protein sequence, read N- to C-terminus: Short-chain dehydrogenase cctT (283 aa).

An N-terminal signal peptide occupies residues 1–20; it reads MLKTVLITGCSHGGLGAAMA. The NADP(+) site is built by Ile-7, Thr-33, Lys-39, Glu-55, and Asn-83. An N-linked (GlcNAc...) asparagine glycan is attached at Asn-131. The active-site Proton donor is Ser-133. 4 residues coordinate NADP(+): Tyr-147, Arg-151, Val-180, and Thr-182. Tyr-147 serves as the catalytic Proton acceptor.

It belongs to the short-chain dehydrogenases/reductases (SDR) family.

Short-chain dehydrogenase; part of the gene cluster that mediates the biosynthesis of the mycotoxin cyclochlorotine, a hepatotoxic and carcinogenic cyclic chlorinated pentapeptide. The function of cctT within the pathway, if any, remains undetermined. The NRPS cctN initially catalyzes the condensation of L-serine (Ser), Pro, L-2-aminobutyrate (2Abu), Ser, and beta-Phe in this order to produce isocyclotine. After the dichlorination of Pro2 catalyzed by cctP2 to produce isocyclochlorotine, the cctO-mediated transacylation of isocyclochlorotine can furnish cyclochlorotine. The subsequent hydroxylation of cyclochlorotine by cctR yields hydroxycyclochlorotine as the final product. CctP1 probably acts as a phenylalanine aminomutase and provides the uncommon building block beta-Phe. Furthermore, 2Abu can be synthesized from threonine by one of the threonine dehydratases and transaminases localized outside of the cluster. The functions of the remaining proteins encoded by the cluster, cctM and cctT, have not been identified yet. The sequence is that of Short-chain dehydrogenase cctT from Talaromyces islandicus (Penicillium islandicum).